A 360-amino-acid chain; its full sequence is Peptide chain release factor 1 (360 aa).

Q234 is modified (N5-methylglutamine).

It belongs to the prokaryotic/mitochondrial release factor family. Post-translationally, methylated by PrmC. Methylation increases the termination efficiency of RF1.

It localises to the cytoplasm. Its function is as follows. Peptide chain release factor 1 directs the termination of translation in response to the peptide chain termination codons UAG and UAA. The chain is Peptide chain release factor 1 from Clostridium perfringens (strain 13 / Type A).